Reading from the N-terminus, the 294-residue chain is Ribosomal RNA small subunit methyltransferase A (294 aa).

The S-adenosyl-L-methionine site is built by Asn-31, Leu-33, Gly-58, Glu-79, Asp-104, and Asn-129.

Belongs to the class I-like SAM-binding methyltransferase superfamily. rRNA adenine N(6)-methyltransferase family. RsmA subfamily.

It is found in the cytoplasm. The enzyme catalyses adenosine(1518)/adenosine(1519) in 16S rRNA + 4 S-adenosyl-L-methionine = N(6)-dimethyladenosine(1518)/N(6)-dimethyladenosine(1519) in 16S rRNA + 4 S-adenosyl-L-homocysteine + 4 H(+). In terms of biological role, specifically dimethylates two adjacent adenosines (A1518 and A1519) in the loop of a conserved hairpin near the 3'-end of 16S rRNA in the 30S particle. May play a critical role in biogenesis of 30S subunits. This is Ribosomal RNA small subunit methyltransferase A from Oceanobacillus iheyensis (strain DSM 14371 / CIP 107618 / JCM 11309 / KCTC 3954 / HTE831).